The sequence spans 323 residues: UDP-N-acetylenolpyruvoylglucosamine reductase (323 aa).

The 182-residue stretch at I33–G214 folds into the FAD-binding PCMH-type domain. S243 acts as the Proton donor in catalysis. The active site involves E315.

The protein belongs to the MurB family. The cofactor is FAD.

Its subcellular location is the cytoplasm. It carries out the reaction UDP-N-acetyl-alpha-D-muramate + NADP(+) = UDP-N-acetyl-3-O-(1-carboxyvinyl)-alpha-D-glucosamine + NADPH + H(+). The protein operates within cell wall biogenesis; peptidoglycan biosynthesis. Its function is as follows. Cell wall formation. This chain is UDP-N-acetylenolpyruvoylglucosamine reductase, found in Treponema denticola (strain ATCC 35405 / DSM 14222 / CIP 103919 / JCM 8153 / KCTC 15104).